The chain runs to 196 residues: Mpv17-like protein (196 aa).

Over 1–16 the chain is Cytoplasmic; it reads MAGWWPALSRAARRHP. Positions 16–55 are targeting to peroxisomes; that stretch reads PWPTNVLLYGSLVSAGDALQQRLQGREANWRQTRRVATLV. The helical transmembrane segment at 17–34 threads the bilayer; it reads WPTNVLLYGSLVSAGDAL. At 35–50 the chain is on the lumenal side; it reads QQRLQGREANWRQTRR. A helical transmembrane segment spans residues 51–67; it reads VATLVVTFHANFNYVWL. Topologically, residues 68–90 are cytoplasmic; that stretch reads RLLERALPGRAPHALLAKLLCDQ. Residues 91–108 form a helical membrane-spanning segment; that stretch reads VVGAPIAVSAFYVGMSIL. The Lumenal segment spans residues 109-150; that stretch reads QGKDDIFLDLKQKFWNTYLSGLMYWPFVQLTNFSLVPVQWRT. Residues 151-167 form a helical membrane-spanning segment; it reads AYAGVCGFLWATFICFS. The Cytoplasmic segment spans residues 168–196; it reads QQSGDGTFKSAFTILYTKGTSATEGYPKK.

The protein belongs to the peroxisomal membrane protein PXMP2/4 family. In terms of tissue distribution, isoform 1 is detected in the kidney (at protein level). Isoform 1 and isoform 2 are expressed in the kidney, heart, liver, lung, pancreas and skeletal muscle.

The protein localises to the peroxisome membrane. Its function is as follows. Participates in reactive oxygen species metabolism by up- or down-regulation of the genes of antioxidant enzymes. Protective against the mitochondrial apoptotic cascade. The chain is Mpv17-like protein (MPV17L) from Homo sapiens (Human).